A 269-amino-acid chain; its full sequence is Microtubule-associated protein RP/EB family member 1 (269 aa).

One can recognise a Calponin-homology (CH) domain in the interval N14–D116. The disordered stretch occupies residues R168 to G190. One can recognise an EB1 C-terminal domain in the interval T186–I256.

Belongs to the MAPRE family.

It localises to the cytoplasm. The protein resides in the cytoskeleton. The protein localises to the microtubule organizing center. It is found in the centrosome. Its subcellular location is the golgi apparatus. It localises to the spindle. The protein resides in the spindle pole. Functionally, plus-end tracking protein (+TIP) that binds to the plus-end of microtubules and regulates the dynamics of the microtubule cytoskeleton. Promotes cytoplasmic microtubule nucleation and elongation. Involved in mitotic spindle positioning by stabilizing microtubules and promoting dynamic connection between astral microtubules and the cortex during mitotic chromosome segregation. In Xenopus tropicalis (Western clawed frog), this protein is Microtubule-associated protein RP/EB family member 1 (mapre1).